The following is a 280-amino-acid chain: Nucleotide-binding protein Mfla_0145 (280 aa).

8–15 (GLSGSGKS) contacts ATP. 57-60 (DTRS) is a binding site for GTP.

It belongs to the RapZ-like family.

Displays ATPase and GTPase activities. In Methylobacillus flagellatus (strain ATCC 51484 / DSM 6875 / VKM B-1610 / KT), this protein is Nucleotide-binding protein Mfla_0145.